The primary structure comprises 528 residues: Protein BFR2 (528 aa).

Disordered stretches follow at residues 14–158 (NKSK…ADAK) and 372–401 (DSNS…NNAI). Acidic residues predominate over residues 132–146 (DSGDSDSDSGSDAGE).

It belongs to the AATF family.

Its subcellular location is the nucleus. It is found in the nucleolus. In Eremothecium gossypii (strain ATCC 10895 / CBS 109.51 / FGSC 9923 / NRRL Y-1056) (Yeast), this protein is Protein BFR2 (BFR2).